The sequence spans 493 residues: Transcript termination protein A18 (493 aa).

Residues 100 to 256 (MIELKRPLYI…NSIINIAKLS (157 aa)) enclose the Helicase ATP-binding domain. Residue 113-120 (LACGFGKT) participates in ATP binding. The DESH box signature appears at 206–209 (DESH).

This sequence belongs to the helicase family. Poxviruses subfamily. As to quaternary structure, interacts with G2. Might be part of a transcription complex composed at least of G2, A18, and H5.

The protein resides in the virion. Its function is as follows. DNA helicase which seems to act as a postreplicative transcription termination factor. Involved in ATP-dependent release of nascent RNA. Forms a stable complex with single-stranded DNA, and to a lesser extent RNA. This Camelus protein is Transcript termination protein A18.